We begin with the raw amino-acid sequence, 447 residues long: 3-phosphoshikimate 1-carboxyvinyltransferase (447 aa).

3 residues coordinate 3-phosphoshikimate: K25, S26, and R30. Residue K25 participates in phosphoenolpyruvate binding. Phosphoenolpyruvate-binding residues include G96 and R124. S171, S172, Q173, S203, D325, and K352 together coordinate 3-phosphoshikimate. Q173 lines the phosphoenolpyruvate pocket. The active-site Proton acceptor is the D325. Positions 356, 400, and 425 each coordinate phosphoenolpyruvate.

It belongs to the EPSP synthase family. In terms of assembly, monomer.

The protein localises to the cytoplasm. The catalysed reaction is 3-phosphoshikimate + phosphoenolpyruvate = 5-O-(1-carboxyvinyl)-3-phosphoshikimate + phosphate. Its pathway is metabolic intermediate biosynthesis; chorismate biosynthesis; chorismate from D-erythrose 4-phosphate and phosphoenolpyruvate: step 6/7. Its function is as follows. Catalyzes the transfer of the enolpyruvyl moiety of phosphoenolpyruvate (PEP) to the 5-hydroxyl of shikimate-3-phosphate (S3P) to produce enolpyruvyl shikimate-3-phosphate and inorganic phosphate. This Bordetella petrii (strain ATCC BAA-461 / DSM 12804 / CCUG 43448) protein is 3-phosphoshikimate 1-carboxyvinyltransferase.